Consider the following 315-residue polypeptide: Olfactory receptor 5M1 (315 aa).

At 1-25 (MFSPNHTIVTEFILLGLTDDPVLEK) the chain is on the extracellular side. A glycan (N-linked (GlcNAc...) asparagine) is linked at Asn5. Residues 26 to 46 (ILFGVFLAIYLITLAGNLCMI) traverse the membrane as a helical segment. Over 47-54 (LLIRTNSH) the chain is Cytoplasmic. Residues 55–75 (LQTPMYFFLGHLSFVDICYSS) traverse the membrane as a helical segment. Topologically, residues 76–99 (NVTPNMLHNFLSEQKTISYAGCFT) are extracellular. Cys97 and Cys189 are joined by a disulfide. The helical transmembrane segment at 100–120 (QCLLFIALVITEFYILASMAL) threads the bilayer. Residues 121–139 (DRYVAICSPLHYSSRMSKN) are Cytoplasmic-facing. Residues 140–160 (ICVCLVTIPYMYGFLSGFSQS) form a helical membrane-spanning segment. Topologically, residues 161–196 (LLTFHLSFCGSLEINHFYCADPPLIMLACSDTRVKK) are extracellular. A helical transmembrane segment spans residues 197–217 (MAMFVVAGFNLSSSLFIILLS). Topologically, residues 218–237 (YLFIFAAIFRIRSAEGRHKA) are cytoplasmic. Residues 238 to 258 (FSTCASHLTIVTLFYGTLFCM) form a helical membrane-spanning segment. At 259–271 (YVRPPSEKSVEES) the chain is on the extracellular side. The helical transmembrane segment at 272 to 292 (KITAVFYTFLSPMLNPLIYSL) threads the bilayer. Residues 293–315 (RNTDVILAMQQMIRGKSFHKIAV) are Cytoplasmic-facing.

It belongs to the G-protein coupled receptor 1 family.

Its subcellular location is the cell membrane. In terms of biological role, odorant receptor. This Homo sapiens (Human) protein is Olfactory receptor 5M1 (OR5M1).